The primary structure comprises 367 residues: Outer membrane protein P2 (367 aa).

The first 20 residues, 1–20 (MKKTLAALIVGAFAASAANA), serve as a signal peptide directing secretion.

This sequence belongs to the Gram-negative porin family. Homotrimer.

It localises to the cell outer membrane. Forms pores that allow passive diffusion of small molecules across the outer membrane. This chain is Outer membrane protein P2 (ompP2), found in Haemophilus influenzae.